The chain runs to 353 residues: WAT1-related protein At3g28100 (353 aa).

10 helical membrane passes run 12 to 32, 43 to 63, 81 to 101, 105 to 125, 137 to 157, 187 to 207, 219 to 239, 252 to 272, 283 to 303, and 308 to 328; these read AVFL…STLF, YAFL…SLFF, IGLL…GIEY, TLAS…AIIF, SVAK…VVLY, WLIG…SFIL, FTVS…IGLV, FDIT…YYVI, LYLA…SAVF, and LYLG…AVMW. In terms of domain architecture, EamA spans 27–155; that stretch reads GISTLFKVAT…LSLIGALVVV (129 aa).

It belongs to the drug/metabolite transporter (DMT) superfamily. Plant drug/metabolite exporter (P-DME) (TC 2.A.7.4) family.

The protein resides in the membrane. In Arabidopsis thaliana (Mouse-ear cress), this protein is WAT1-related protein At3g28100.